The following is a 366-amino-acid chain: Histidinol-phosphate aminotransferase 2 (366 aa).

The segment covering 1–11 (MQVKDQLSSLQ) has biased composition (polar residues). Positions 1-21 (MQVKDQLSSLQPYKPGKSPEQ) are disordered. At Lys-222 the chain carries N6-(pyridoxal phosphate)lysine.

The protein belongs to the class-II pyridoxal-phosphate-dependent aminotransferase family. Histidinol-phosphate aminotransferase subfamily. In terms of assembly, homodimer. Requires pyridoxal 5'-phosphate as cofactor.

It catalyses the reaction L-histidinol phosphate + 2-oxoglutarate = 3-(imidazol-4-yl)-2-oxopropyl phosphate + L-glutamate. It functions in the pathway amino-acid biosynthesis; L-histidine biosynthesis; L-histidine from 5-phospho-alpha-D-ribose 1-diphosphate: step 7/9. This is Histidinol-phosphate aminotransferase 2 (hisC2) from Bacillus anthracis.